The primary structure comprises 458 residues: NALCN channel auxiliary factor 1 (458 aa).

Residues 40–60 traverse the membrane as a helical segment; sequence LSLASLLFFTVLLSDHLWFCA. The interval 70–155 is disordered; that stretch reads KEHQQQQRQQ…NRGKDDRGKA (86 aa). A compositionally biased stretch (low complexity) spans 75-96; that stretch reads QQRQQQQQQQQQRQRQQQQQQR. Over residues 136 to 145 the composition is skewed to gly residues; that stretch reads GDGGGGGGKG. 7 disulfide bridges follow: Cys191-Cys261, Cys226-Cys313, Cys246-Cys261, Cys304-Cys341, Cys324-Cys377, Cys330-Cys376, and Cys334-Cys361. N-linked (GlcNAc...) asparagine glycosylation occurs at Asn217. A helical transmembrane segment spans residues 417-437; the sequence is LKLCVLVLILLHTVLTASAAQ.

Belongs to the NALF family. As to quaternary structure, component of the NALCN channel complex. NALCN complex consists of NALCN and auxiliary subunits, UNC79, UNC80 and NACL1. These auxiliary subunits are essential for the NALCN channel function.

It is found in the cell membrane. In terms of biological role, auxillary component of the NALCN sodium channel complex, a channel that regulates the resting membrane potential and controls neuronal excitability. In Homo sapiens (Human), this protein is NALCN channel auxiliary factor 1.